Reading from the N-terminus, the 774-residue chain is Multiple C2 domain and transmembrane region protein 11 (774 aa).

The segment covering methionine 1 to aspartate 12 has biased composition (gly residues). The tract at residues methionine 1 to asparagine 30 is disordered. 3 consecutive C2 domains span residues glycine 9–tyrosine 145, valine 184–tyrosine 307, and leucine 338–tyrosine 471. 4 residues coordinate Ca(2+): aspartate 62, asparagine 110, aspartate 112, and aspartate 118. 2 consecutive transmembrane segments (helical) span residues leucine 608–phenylalanine 628 and phenylalanine 722–phenylalanine 742.

Belongs to the MCTP family. Ca(2+) is required as a cofactor. In terms of tissue distribution, observed in flowers.

It localises to the endoplasmic reticulum membrane. May function as a signaling molecule by regulating the trafficking of other regulators. This Arabidopsis thaliana (Mouse-ear cress) protein is Multiple C2 domain and transmembrane region protein 11.